Here is a 465-residue protein sequence, read N- to C-terminus: Iron-sulfur cluster assembly SufBD family protein SERP0500 (465 aa).

The protein belongs to the iron-sulfur cluster assembly SufBD family.

In Staphylococcus epidermidis (strain ATCC 35984 / DSM 28319 / BCRC 17069 / CCUG 31568 / BM 3577 / RP62A), this protein is Iron-sulfur cluster assembly SufBD family protein SERP0500.